We begin with the raw amino-acid sequence, 42 residues long: Photosystem II reaction center protein J (42 aa).

A helical transmembrane segment spans residues 12 to 32; it reads LWFVGMIVGLAALGLLGIFFY.

This sequence belongs to the PsbJ family. As to quaternary structure, PSII is composed of 1 copy each of membrane proteins PsbA, PsbB, PsbC, PsbD, PsbE, PsbF, PsbH, PsbI, PsbJ, PsbK, PsbL, PsbM, PsbT, PsbX, PsbY, PsbZ, Psb30/Ycf12, at least 3 peripheral proteins of the oxygen-evolving complex and a large number of cofactors. It forms dimeric complexes.

The protein resides in the plastid. It localises to the chloroplast thylakoid membrane. One of the components of the core complex of photosystem II (PSII). PSII is a light-driven water:plastoquinone oxidoreductase that uses light energy to abstract electrons from H(2)O, generating O(2) and a proton gradient subsequently used for ATP formation. It consists of a core antenna complex that captures photons, and an electron transfer chain that converts photonic excitation into a charge separation. The polypeptide is Photosystem II reaction center protein J (Nephroselmis olivacea (Green alga)).